The sequence spans 2979 residues: Polyketide synthase-nonribosomal peptide synthetase TwmB (2979 aa).

A Ketosynthase family 3 (KS3) domain is found at 5–435 (GAEIAIIGSG…GTNAHAILES (431 aa)). Residues C176, H315, and H355 each act as for beta-ketoacyl synthase activity in the active site. Positions 549 to 864 (VFTGQGAQWA…PYTGLFTRGV (316 aa)) are malonyl-CoA:ACP transacylase (MAT) domain. S643 serves as the catalytic For malonyltransferase activity. Residues 936–1070 (HDLLGHLTPN…GRVRIHLGEA (135 aa)) are N-terminal hotdog fold. The tract at residues 936-1234 (HDLLGHLTPN…ECVPFSRQTA (299 aa)) is dehydratase (DH) domain. The 300-residue stretch at 936–1235 (HDLLGHLTPN…CVPFSRQTAK (300 aa)) folds into the PKS/mFAS DH domain. H968 functions as the Proton acceptor; for dehydratase activity in the catalytic mechanism. The segment at 1085–1235 (LVSVSEKKFY…CVPFSRQTAK (151 aa)) is C-terminal hotdog fold. Residue D1141 is the Proton donor; for dehydratase activity of the active site. The inactive methyltransferase (MT) domain stretch occupies residues 1387–1572 (NFTAHLAGIL…GIDTSTVEQP (186 aa)). Positions 2098–2271 (TYWLVGLTGG…AASVMDIGAV (174 aa)) are ketoreductase (KR)domain. Positions 2380-2465 (RNNEEAYGIV…ELVDTATEAI (86 aa)) constitute a Carrier domain. Residue S2425 is modified to O-(pantetheine 4'-phosphoryl)serine. The segment at 2476–2497 (YPAEQTSSQNSDSGQDMASSFD) is disordered. Over residues 2479 to 2497 (EQTSSQNSDSGQDMASSFD) the composition is skewed to polar residues. Residues 2534-2970 (KSIPVSFTQA…MTLGQAALAE (437 aa)) form a condensation region.

As to quaternary structure, interacts with TwmE. The cofactor is pantetheine 4'-phosphate.

The enzyme catalyses 5-aminopentanoate + 7 malonyl-CoA + acetyl-CoA + 11 NADPH + 17 H(+) = wortmanamide A + 7 CO2 + 11 NADP(+) + 8 CoA + 6 H2O. It catalyses the reaction 5-aminopentanoate + 8 malonyl-CoA + acetyl-CoA + 13 NADPH + 20 H(+) = wortmanamide B + 8 CO2 + 13 NADP(+) + 9 CoA + 7 H2O. It functions in the pathway secondary metabolite biosynthesis. In terms of biological role, polyketide synthase-nonribosomal peptide synthetase; part of the gene cluster that mediates the biosynthesis of wortmanamides A and B, reduced long-chain polyketides amidated with a specific omega-amino acid, 5-aminopentanoic acid (5PA). The PKS modules of TwmB are involved in the synthesis of the polyketide backbone, whereas the non-canonical C domain of TwmB is a bonafide condensation domain that specifically selects 5PA and catalyzes amidation to release polyketide chain. The C domain clearly prefers C16 and C18 fatty acyl substrates, which is consistent with simultaneous formation of both octaketide and nonaketide acyl amides wortmanamides A and B. Because TwmB lacks a designated enoylreductase (ER) domain, the required activity is provided the enoyl reductase TwmE. The roles of the remaining enzymes have still to be clarified. The chain is Polyketide synthase-nonribosomal peptide synthetase TwmB from Talaromyces wortmannii (Penicillium wortmannii).